Here is a 129-residue protein sequence, read N- to C-terminus: CD59B glycoprotein (129 aa).

The first 23 residues, 1-23 (MRAQRGLILLLLLLAVFCSTAVS), serve as a signal peptide directing secretion. The region spanning 24–107 (LKCYNCLDPV…GLEEPNNAET (84 aa)) is the UPAR/Ly6 domain. Intrachain disulfides connect Cys26–Cys49, Cys29–Cys36, Cys42–Cys62, Cys68–Cys86, and Cys87–Cys92. Asn39 carries an N-linked (GlcNAc...) asparagine glycan. A lipid anchor (GPI-anchor amidated asparagine) is attached at Asn104. Residues 105–129 (AETSSLRKTALLGTSVLVAILKFCF) constitute a propeptide, removed in mature form.

In terms of assembly, interacts with T-cell surface antigen CD2. Post-translationally, N- and O-glycosylated. Widely expressed in the kidneys, brain, lungs, spleen and testis Testis-specific.

The protein resides in the cell membrane. The protein localises to the secreted. Functionally, potent inhibitor of the complement membrane attack complex (MAC) action, which protects self-cells from damage during complement activation. Acts by binding to the beta-haipins of C8 (C8A and C8B) components of the assembling MAC, forming an intermolecular beta-sheet that prevents incorporation of the multiple copies of C9 required for complete formation of the osmolytic pore. This chain is CD59B glycoprotein, found in Mus musculus (Mouse).